The sequence spans 77 residues: Pollen allergen Amb p 5a (77 aa).

Residues 1 to 22 form the signal peptide; it reads MNNEKNVSFEFIGSTDEVDEIK. 4 disulfide bridges follow: Cys-26–Cys-61, Cys-33–Cys-48, Cys-40–Cys-54, and Cys-41–Cys-65.

In Ambrosia psilostachya (Western ragweed), this protein is Pollen allergen Amb p 5a.